Here is a 122-residue protein sequence, read N- to C-terminus: Ribosome-binding factor A (122 aa).

The protein belongs to the RbfA family. As to quaternary structure, monomer. Binds 30S ribosomal subunits, but not 50S ribosomal subunits or 70S ribosomes.

The protein localises to the cytoplasm. Functionally, one of several proteins that assist in the late maturation steps of the functional core of the 30S ribosomal subunit. Associates with free 30S ribosomal subunits (but not with 30S subunits that are part of 70S ribosomes or polysomes). Required for efficient processing of 16S rRNA. May interact with the 5'-terminal helix region of 16S rRNA. The chain is Ribosome-binding factor A from Cupriavidus necator (strain ATCC 17699 / DSM 428 / KCTC 22496 / NCIMB 10442 / H16 / Stanier 337) (Ralstonia eutropha).